A 461-amino-acid chain; its full sequence is V-type ATP synthase beta chain (461 aa).

Belongs to the ATPase alpha/beta chains family.

In terms of biological role, produces ATP from ADP in the presence of a proton gradient across the membrane. The V-type beta chain is a regulatory subunit. The polypeptide is V-type ATP synthase beta chain (Clostridium botulinum (strain Kyoto / Type A2)).